Reading from the N-terminus, the 430-residue chain is MQASIESTGNLERRLTFTLPQERLETHVGGRLRELARTTRIKGFRPGKVPTKVIEQRFGQQVRAEAMEGLLRETFDSAVREHSLRLAGNPRIDQGETDFDFVATFEVVPDFGDIDVTKLSVVRATAEVTDADIDQMIENLRLQRRTWNPVERGAQVGDLVALETWSQAGDERLPAEGVETGSSVLGSGVMFDQIEKGLEGLTKGEEKTLTVDFPAEWRVPQLAGKTVQVHVKAVEVSEPVLPAVDKDFIKSFGVKSGDAEQFRADIRTNLERELKGALMNRLRREVGEQLIAAYAHVEMPPRLVESEARSMLAQQVEQVRRSGRDPGQVPADAHQGFMDAAAKRVLVGLLVGEVARRNELRLESKRVSETLRLIASTYEEPEQVIEMYRNDPQLMNGLQSRVMEEQVIDWIAERAQHTEQSLSFQDAIRV.

The 86-residue stretch at 157–242 folds into the PPIase FKBP-type domain; it reads GDLVALETWS…AVEVSEPVLP (86 aa).

This sequence belongs to the FKBP-type PPIase family. Tig subfamily.

Its subcellular location is the cytoplasm. It catalyses the reaction [protein]-peptidylproline (omega=180) = [protein]-peptidylproline (omega=0). Functionally, involved in protein export. Acts as a chaperone by maintaining the newly synthesized protein in an open conformation. Functions as a peptidyl-prolyl cis-trans isomerase. The sequence is that of Trigger factor from Xanthomonas axonopodis pv. citri (strain 306).